The sequence spans 360 residues: MIIYATVVQTINSFVRLESLKEVYGLIWIFVPIFSLVLGIITGVLVIVWLEREISAGIQQRIGPEYAGPLGILQALADGTKLLFKENLRPSRGNTPLFSIGPSIAVISILLSYSVIPFSNHLVLADLNIGIFLWIAISSIAPIGLLMSGYGSNNKYSFLGGLRAAAQSISYEIPLTLCVLSISLLSNSLSTVDIVEAQSKYGFWGWNLWRQPIGFIIFLISSLAECERLPFDLPEAEEELIAGYQTEYSGIKFGLFYVASYLNLLISSLFVTVLYLGGWNISIPYISILELFQRDQIFGTTICIFITLAKTYLFLFISIATRWTLPRLRMDQLLNLGWKFLLPISLGNLLLTTSFQLFSL.

9 consecutive transmembrane segments (helical) span residues 27-47 (IWIF…VLVI), 98-118 (FSIG…VIPF), 129-149 (IGIF…LMSG), 165-185 (AAQS…ISLL), 203-223 (FWGW…ISSL), 248-268 (YSGI…LISS), 269-289 (LFVT…ISIL), 297-317 (IFGT…FLFI), and 340-360 (FLLP…LFSL).

It belongs to the complex I subunit 1 family. As to quaternary structure, NDH is composed of at least 16 different subunits, 5 of which are encoded in the nucleus.

The protein localises to the plastid. It localises to the chloroplast thylakoid membrane. The enzyme catalyses a plastoquinone + NADH + (n+1) H(+)(in) = a plastoquinol + NAD(+) + n H(+)(out). It catalyses the reaction a plastoquinone + NADPH + (n+1) H(+)(in) = a plastoquinol + NADP(+) + n H(+)(out). Functionally, NDH shuttles electrons from NAD(P)H:plastoquinone, via FMN and iron-sulfur (Fe-S) centers, to quinones in the photosynthetic chain and possibly in a chloroplast respiratory chain. The immediate electron acceptor for the enzyme in this species is believed to be plastoquinone. Couples the redox reaction to proton translocation, and thus conserves the redox energy in a proton gradient. This is NAD(P)H-quinone oxidoreductase subunit 1, chloroplastic from Olimarabidopsis pumila (Dwarf rocket).